Consider the following 239-residue polypeptide: Fatty acid metabolism regulator protein (239 aa).

The 69-residue stretch at 6 to 74 (QSPAGFAEEY…HGKPTKVNNF (69 aa)) folds into the HTH gntR-type domain. The segment at residues 34 to 53 (ERELSELIGVTRTTLREVLQ) is a DNA-binding region (H-T-H motif).

Homodimer.

Its subcellular location is the cytoplasm. Multifunctional regulator of fatty acid metabolism. Represses transcription of at least eight genes required for fatty acid transport and beta-oxidation including fadA, fadB, fadD, fadL and fadE. Activates transcription of at least three genes required for unsaturated fatty acid biosynthesis: fabA, fabB and iclR, the gene encoding the transcriptional regulator of the aceBAK operon encoding the glyoxylate shunt enzymes. Binding of FadR is specifically inhibited by long chain fatty acyl-CoA compounds. The polypeptide is Fatty acid metabolism regulator protein (Salmonella typhi).